A 172-amino-acid polypeptide reads, in one-letter code: MLDAFAKVVAQADARGEFLSNTQLDALSSMVAEGNKRLDVVNKINSNASAIVTNSARALFAEQPQLIQPGGNAYTSRRMAACLRDMEIVLRYVSYAMIAGDSSVLDDRCLNGLRETYQALGTPGSSVSVAVQKMKEASVALANDLTGITQGDCSALIAELGSYFDRAAVSVV.

Position 72 is an N4-methylasparagine (Asn72). Positions 82 and 153 each coordinate (2R,3E)-phycocyanobilin.

The protein belongs to the phycobiliprotein family. As to quaternary structure, heterodimer of an alpha and a beta subunit, which further assembles into trimers and the trimers into hexamers. The basic functional unit of phycobiliproteins is a ring-shaped hexamer formed from two back-to-back trimers contacting via the alpha chain subunits. The trimers are composed of alpha/beta subunit heterodimers arranged around a three-fold axis of symmetry. The phycoerythrins also contain a gamma subunit which is located in the center of the hexamer. In terms of processing, contains two covalently linked bilin chromophores.

Its subcellular location is the plastid. The protein localises to the chloroplast thylakoid membrane. Functionally, light-harvesting photosynthetic bile pigment-protein from the phycobiliprotein complex (phycobilisome, PBS). Phycocyanin is the major phycobiliprotein in the PBS rod. In Pyropia yezoensis (Susabi-nori), this protein is C-phycocyanin beta chain (cpcB).